The following is a 1343-amino-acid chain: DNA-directed RNA polymerase subunit beta (1343 aa).

It belongs to the RNA polymerase beta chain family. The RNAP catalytic core consists of 2 alpha, 1 beta, 1 beta' and 1 omega subunit. When a sigma factor is associated with the core the holoenzyme is formed, which can initiate transcription.

It catalyses the reaction RNA(n) + a ribonucleoside 5'-triphosphate = RNA(n+1) + diphosphate. Its function is as follows. DNA-dependent RNA polymerase catalyzes the transcription of DNA into RNA using the four ribonucleoside triphosphates as substrates. The protein is DNA-directed RNA polymerase subunit beta of Shewanella frigidimarina (strain NCIMB 400).